Reading from the N-terminus, the 406-residue chain is Testis-specific Y-encoded-like protein 4 (406 aa).

4 disordered regions span residues 1-63, 81-121, 161-189, and 387-406; these read MNGV…EHCG, GLED…AKPK, EAGA…TRPR, and VRVP…FQSG. Positions 8 to 20 are enriched in polar residues; the sequence is NELSLANTTTPSH. Positions 93 to 102 are enriched in low complexity; it reads DAPSAPVAAD. Residues 167-188 are compositionally biased toward basic and acidic residues; that stretch reads QEKKGLQKEKKVAGGGKEETRP.

It belongs to the nucleosome assembly protein (NAP) family.

The chain is Testis-specific Y-encoded-like protein 4 (Tspyl4) from Mus musculus (Mouse).